The sequence spans 399 residues: Glutathione-independent formaldehyde dehydrogenase (399 aa).

Cys47 lines the Zn(2+) pocket. The NAD(+) site is built by Gly48, Ser49, and His52. Zn(2+) contacts are provided by His68, Cys98, Cys101, Cys104, Cys112, and Asp170. The NAD(+) site is built by Val198, Asp218, Arg223, Val263, Arg268, His270, Pro300, Leu302, Gly337, and Thr339.

This sequence belongs to the zinc-containing alcohol dehydrogenase family. Homotetramer. Zn(2+) serves as cofactor.

The catalysed reaction is formaldehyde + NAD(+) + H2O = formate + NADH + 2 H(+). It catalyses the reaction acetaldehyde + NAD(+) + H2O = acetate + NADH + 2 H(+). It carries out the reaction 2 formaldehyde + H2O = methanol + formate + H(+). Its activity is regulated as follows. Inactivated by bipyridine and p-chloromercuribenzoate. In terms of biological role, dehydrogenase that catalyzes the NAD(+)-dependent oxidation of formaldehyde and acetaldehyde, and, to a lesser extent, long-chain alcohols, but is inactive against propionaldehyde, butyraldehyde, methanol and ethanol. Can also catalyze the dismutation of a wide range of aldehydes such as formaldehyde. The protein is Glutathione-independent formaldehyde dehydrogenase of Pseudomonas putida (Arthrobacter siderocapsulatus).